A 490-amino-acid chain; its full sequence is Cis-aconitate decarboxylase (490 aa).

The protein belongs to the PrpD family. In terms of assembly, homodimer.

Its subcellular location is the mitochondrion. It carries out the reaction cis-aconitate + H(+) = itaconate + CO2. Functionally, involved in the production of itaconic acid, a soluble unsaturated dicarboxylic acid mainly produced from sugars. In Aspergillus terreus (strain NIH 2624 / FGSC A1156), this protein is Cis-aconitate decarboxylase (cad1).